The chain runs to 295 residues: Mycothiol acetyltransferase (295 aa).

N-acetyltransferase domains are found at residues 4–138 (TEWR…RPLT) and 149–295 (VRIA…YAAN). Aspartate 36 is a 1D-myo-inositol 2-(L-cysteinylamino)-2-deoxy-alpha-D-glucopyranoside binding site. Acetyl-CoA-binding positions include 77-79 (LVV) and 85-90 (RRGIGA). 1D-myo-inositol 2-(L-cysteinylamino)-2-deoxy-alpha-D-glucopyranoside is bound by residues glutamate 176, lysine 217, and glutamate 225. Acetyl-CoA contacts are provided by residues 229–231 (VGV) and 236–242 (QGRGLGY). Residue tyrosine 266 coordinates 1D-myo-inositol 2-(L-cysteinylamino)-2-deoxy-alpha-D-glucopyranoside. 271–276 (NSAAVN) is a binding site for acetyl-CoA.

This sequence belongs to the acetyltransferase family. MshD subfamily. As to quaternary structure, monomer.

The catalysed reaction is 1D-myo-inositol 2-(L-cysteinylamino)-2-deoxy-alpha-D-glucopyranoside + acetyl-CoA = mycothiol + CoA + H(+). In terms of biological role, catalyzes the transfer of acetyl from acetyl-CoA to desacetylmycothiol (Cys-GlcN-Ins) to form mycothiol. This chain is Mycothiol acetyltransferase (mshD), found in Mycolicibacterium smegmatis (strain ATCC 700084 / mc(2)155) (Mycobacterium smegmatis).